The chain runs to 443 residues: Xaa-Pro dipeptidase (443 aa).

Mn(2+) contacts are provided by Asp246, Asp257, His339, Glu384, and Glu423.

This sequence belongs to the peptidase M24B family. Bacterial-type prolidase subfamily. Mn(2+) is required as a cofactor.

The catalysed reaction is Xaa-L-Pro dipeptide + H2O = an L-alpha-amino acid + L-proline. Splits dipeptides with a prolyl residue in the C-terminal position. The protein is Xaa-Pro dipeptidase of Yersinia pestis bv. Antiqua (strain Nepal516).